The following is a 3584-amino-acid chain: D-lysergyl-peptide-synthetase subunit 1 (3584 aa).

Residues 25–44 (IESINGDKNKSERHTASSSA) are disordered. Residues 29–39 (NGDKNKSERHT) are compositionally biased toward basic and acidic residues. The segment at 307–706 (SCCSRPNSQA…LGRKDDQVKI (400 aa)) is adenylation (A) domain 1. The Carrier 1 domain maps to 848–917 (REKLLQALFA…TLREIVIVST (70 aa)). Ser880 is modified (O-(pantetheine 4'-phosphoryl)serine). The interval 962–1353 (EDIYPCTHLQ…EHILTQIHSN (392 aa)) is condensation (C) domain 1. Residues 1396 to 1803 (QAKCQAQPDA…RRKDAQVKIR (408 aa)) are adenylation (A) domain 2. The Carrier 2 domain maps to 1948 to 2016 (TEHEISAIWA…TIRKLALARG (69 aa)). An O-(pantetheine 4'-phosphoryl)serine modification is found at Ser1980. The segment at 2066–2483 (ERIYPCSPIQ…ALPVLDEDQM (418 aa)) is condensation (C) domain 2. Residues 2508–2906 (QCIRCPDSPS…GRNDDQVKVR (399 aa)) are adenylation (A) domain 3. In terms of domain architecture, Carrier 3 spans 3041–3109 (MEAELQQLVG…RLSDLARIVE (69 aa)). Ser3073 carries the O-(pantetheine 4'-phosphoryl)serine modification. Positions 3174 to 3472 (LYFSKPMASE…VAKSTTWSSD (299 aa)) are cyclization (Cyc) domain.

The protein belongs to the NRP synthetase family.

It functions in the pathway alkaloid biosynthesis; ergot alkaloid biosynthesis. Its function is as follows. D-lysergyl-peptide-synthetase subunit 1; part of the gene cluster that mediates the biosynthesis of fungal ergot alkaloid. DmaW catalyzes the first step of ergot alkaloid biosynthesis by condensing dimethylallyl diphosphate (DMAP) and tryptophan to form 4-dimethylallyl-L-tryptophan. The second step is catalyzed by the methyltransferase easF that methylates 4-dimethylallyl-L-tryptophan in the presence of S-adenosyl-L-methionine, resulting in the formation of 4-dimethylallyl-L-abrine. The catalase easC and the FAD-dependent oxidoreductase easE then transform 4-dimethylallyl-L-abrine to chanoclavine-I which is further oxidized by easD in the presence of NAD(+), resulting in the formation of chanoclavine-I aldehyde. Agroclavine dehydrogenase easG then mediates the conversion of chanoclavine-I aldehyde to agroclavine via a non-enzymatic adduct reaction: the substrate is an iminium intermediate that is formed spontaneously from chanoclavine-I aldehyde in the presence of glutathione. The presence of easA is not required to complete this reaction. Further conversion of agroclavine to paspalic acid is a two-step process involving oxidation of agroclavine to elymoclavine and of elymoclavine to paspalic acid, the second step being performed by the elymoclavine oxidase cloA. Paspalic acid is then further converted to D-lysergic acid. Ergopeptines are assembled from D-lysergic acid and three different amino acids by the D-lysergyl-peptide-synthetases composed each of a monomudular and a trimodular nonribosomal peptide synthetase subunit. LpsB and lpsC encode the monomodular subunits responsible for D-lysergic acid activation and incorporation into the ergopeptine backbone. LpsA1 and A2 subunits encode the trimodular nonribosomal peptide synthetase assembling the tripeptide portion of ergopeptines. LpsA1 is responsible for formation of the major ergopeptine, ergotamine, and lpsA2 for alpha-ergocryptine, the minor ergopeptine of the total alkaloid mixture elaborated by C.purpurea. D-lysergyl-tripeptides are assembled by the nonribosomal peptide synthetases and released as N-(D-lysergyl-aminoacyl)-lactams. Cyclolization of the D-lysergyl-tripeptides is performed by the Fe(2+)/2-ketoglutarate-dependent dioxygenase easH which introduces a hydroxyl group into N-(D-lysergyl-aminoacyl)-lactam at alpha-C of the aminoacyl residue followed by spontaneous condensation with the terminal lactam carbonyl group. This Claviceps purpurea (strain 20.1) (Ergot fungus) protein is D-lysergyl-peptide-synthetase subunit 1.